We begin with the raw amino-acid sequence, 545 residues long: Cryptochrome-1 (545 aa).

One can recognise a Photolyase/cryptochrome alpha/beta domain in the interval 3-140 (INNILWFRHG…RCVENVSHTL (138 aa)). FAD contacts are provided by residues arginine 237, serine 265, serine 267, glutamine 308, histidine 375, 407 to 409 (DAD), cysteine 413, and asparagine 416.

Belongs to the DNA photolyase class-1 family. Interacts with tim and per; promoted by light conditions. Requires FAD as cofactor.

The protein resides in the cytoplasm. It is found in the perinuclear region. The protein localises to the nucleus. Blue light-dependent regulator that is the input of the circadian feedback loop. Has no photolyase activity for cyclobutane pyrimidine dimers or 6-4 photoproducts. Regulation of expression by light suggests a role in photoreception for locomotor activity rhythms. Functions, together with per, as a transcriptional repressor required for the oscillation of peripheral circadian clocks and for the correct specification of clock cells. Genes directly activated by the transcription factors Clock (Clk) and cycle (cyc) are repressed by cry. In Anopheles gambiae (African malaria mosquito), this protein is Cryptochrome-1.